The primary structure comprises 66 residues: Alpha-like toxin BmK-M7 (66 aa).

The LCN-type CS-alpha/beta domain occupies 2 to 64 (RDGYIALPHN…VPIRVPGRCH (63 aa)). Disulfide bonds link cysteine 12–cysteine 63, cysteine 16–cysteine 36, cysteine 22–cysteine 46, and cysteine 26–cysteine 48.

Belongs to the long (4 C-C) scorpion toxin superfamily. Sodium channel inhibitor family. Alpha subfamily. Expressed by the venom gland.

Its subcellular location is the secreted. Functionally, alpha toxins bind voltage-independently at site-3 of sodium channels (Nav) and inhibit the inactivation of the activated channels, thereby blocking neuronal transmission. This toxin is active on both mammals and insects. It can be considered as a cardiotoxin, as it can bind to human cardiac sodium channel and modify its normal properties. The protein is Alpha-like toxin BmK-M7 of Olivierus martensii (Manchurian scorpion).